The primary structure comprises 364 residues: MSKKIYIGAMTGTSHDAIDISFLSIGTKIHLEYFHSIKFPKSLRLKVKKLIENNESSLSDLGTINKEIGFLFSKSINEAIGFSKIKKSSIECVAISGQTIRHEINKRFPFSMQIGDPNIVAKETGLLVVSDFRNMHIALGGEGAPLVPEFHNQLFYKARNPRIILNIGGISNYSFVKNRNDIWGTDVGPGNAILDAYCSDFLQIPFDKNGAIAAKGKVDHIELGRLLQNNFFKRKCPKSTGKELFNIKILSKKFLKKKAEDILCTLVEFSAKSIINSIHKNGHNNCDIVICGGGAHNKYLVKRISEMASNDIVLSSDLGHDVFAIESMAFAWMGYKRVSNEALIVQTSSKNVKGLLGSITKSKL.

An ATP-binding site is contributed by 12–19 (GTSHDAID).

This sequence belongs to the anhydro-N-acetylmuramic acid kinase family.

The enzyme catalyses 1,6-anhydro-N-acetyl-beta-muramate + ATP + H2O = N-acetyl-D-muramate 6-phosphate + ADP + H(+). It functions in the pathway amino-sugar metabolism; 1,6-anhydro-N-acetylmuramate degradation. Its pathway is cell wall biogenesis; peptidoglycan recycling. Its function is as follows. Catalyzes the specific phosphorylation of 1,6-anhydro-N-acetylmuramic acid (anhMurNAc) with the simultaneous cleavage of the 1,6-anhydro ring, generating MurNAc-6-P. Is required for the utilization of anhMurNAc either imported from the medium or derived from its own cell wall murein, and thus plays a role in cell wall recycling. The protein is Anhydro-N-acetylmuramic acid kinase of Gamma-proteobacterium EBAC31A08.